The sequence spans 707 residues: Protein MICRORCHIDIA 7 (707 aa).

Basic and acidic residues-rich tracts occupy residues 1–11 and 575–587; these read MDNSIHVKREI and DNRD…DREG. Disordered stretches follow at residues 1–22 and 568–619; these read MDNS…AGFP and EKSA…SGKD. Residues 590–613 show a composition bias toward polar residues; sequence SIKTPTPASDKFYSSSYPNHNGDN. A coiled-coil region spans residues 620-701; that stretch reads GARLQEELRR…NKIKKMEGSK (82 aa). A Nuclear localization signal motif is present at residues 633–640; sequence RRKALEVE.

Belongs to the MORC ATPase protein family. As to quaternary structure, homodimer and heterodimer. Component of an RNA-directed DNA methylation (RdDM) complex. Forms homomeric complexes. Requires Mg(2+) as cofactor. Mn(2+) serves as cofactor.

It localises to the nucleus. Functionally, exhibits ATPase activity. Binds DNA/RNA in a non-specific manner and exhibits endonuclease activity. Probably involved in DNA repair. Involved in RNA-directed DNA methylation (RdDM) as a component of the RdDM machinery and required for gene silencing. May also be involved in the regulation of chromatin architecture to maintain gene silencing. Together with MORC4, acts to suppress a wide set of non-methylated protein-coding genes, especially involved in pathogen response. Positive regulators of defense against the oomycete Hyaloperonospora arabidopsidis (Hpa). The sequence is that of Protein MICRORCHIDIA 7 from Arabidopsis thaliana (Mouse-ear cress).